The following is a 453-amino-acid chain: Allantoinase (453 aa).

Positions 59, 61, 146, 186, 242, and 315 each coordinate Zn(2+). K146 bears the N6-carboxylysine mark.

The protein belongs to the metallo-dependent hydrolases superfamily. Allantoinase family. In terms of assembly, homotetramer. Requires Zn(2+) as cofactor. Carboxylation allows a single lysine to coordinate two zinc ions.

The catalysed reaction is (S)-allantoin + H2O = allantoate + H(+). Its pathway is nitrogen metabolism; (S)-allantoin degradation; allantoate from (S)-allantoin: step 1/1. Its function is as follows. Catalyzes the conversion of allantoin (5-ureidohydantoin) to allantoic acid by hydrolytic cleavage of the five-member hydantoin ring. The chain is Allantoinase from Escherichia coli O139:H28 (strain E24377A / ETEC).